We begin with the raw amino-acid sequence, 244 residues long: Mitochondrial import inner membrane translocase subunit Tim21 (244 aa).

The transit peptide at 1–18 (MICAFLRVVQHAEKLHGS) directs the protein to the mitochondrion. The tract at residues 65–96 (TQGPDPRKAKEDSTKQVSIRRNQREETGVSMS) is disordered. Residues 69–78 (DPRKAKEDST) show a composition bias toward basic and acidic residues. A helical transmembrane segment spans residues 107–127 (SYLIVVLFGVGLTGGLLYAIF).

It belongs to the TIM21 family. As to quaternary structure, component of the TIM23 complex. Component of the MITRAC (mitochondrial translation regulation assembly intermediate of cytochrome c oxidase complex) complex, the core components of this complex being COA3/MITRAC12 and COX14. Interacts with COA3 and MT-CO1/COX1.

It is found in the mitochondrion membrane. Participates in the translocation of transit peptide-containing proteins across the mitochondrial inner membrane. Also required for assembly of mitochondrial respiratory chain complex I and complex IV as component of the MITRAC (mitochondrial translation regulation assembly intermediate of cytochrome c oxidase complex) complex. Probably shuttles between the presequence translocase and respiratory-chain assembly intermediates in a process that promotes incorporation of early nuclear-encoded subunits into these complexes. This is Mitochondrial import inner membrane translocase subunit Tim21 (Timm21) from Mus musculus (Mouse).